An 87-amino-acid polypeptide reads, in one-letter code: Beta-mammal toxin Css4 (87 aa).

The first 19 residues, 1 to 19 (MNSLLMITACLALVGTVWA), serve as a signal peptide directing secretion. Residues 20–85 (KEGYLVNSYT…VWPLPNKTCN (66 aa)) enclose the LCN-type CS-alpha/beta domain. 4 disulfides stabilise this stretch: cysteine 31/cysteine 84, cysteine 35/cysteine 60, cysteine 44/cysteine 65, and cysteine 48/cysteine 67. Asparagine 85 is subject to Asparagine amide.

Belongs to the long (4 C-C) scorpion toxin superfamily. Sodium channel inhibitor family. Beta subfamily. As to expression, expressed by the venom gland.

The protein resides in the secreted. Beta toxins bind voltage-independently at site-4 of sodium channels (Nav) and shift the voltage of activation toward more negative potentials thereby affecting sodium channel activation and promoting spontaneous and repetitive firing. This toxin is active only on mammals. In Centruroides suffusus (Durango bark scorpion), this protein is Beta-mammal toxin Css4.